The chain runs to 153 residues: MDHNQYLLTMFFADDDSFFKYLASQDDESSLSDILQITQYLDFLLLLLIQSKNKLEAVGHCYESLSEEYRQLTKFTDFQDFKKLFNKVPIVTDGRVKLNKGYLFDFVISLMRFKKESSLATTAIDPVRYIDPRRNIAFSNVMDILKSNKVNNN.

It belongs to the orthopoxvirus OPG100 family. Homodimer. Part of a complex composed of the kinase OPG054, OPG092, OPG114, OPG115, OPG142 and OPG157. Interacts with OPG175.

It localises to the virion. Its subcellular location is the host cytoplasm. Functionally, late protein which is a part of a large complex required for early virion morphogenesis. This complex participates in the formation of virosomes and the incorporation of virosomal contents into nascent immature virions. Plays a role in DNA packaging during immature virions (IV) formation. The polypeptide is Virion assembly protein OPG100 (OPG100) (Vaccinia virus (strain Western Reserve) (VACV)).